Here is a 1328-residue protein sequence, read N- to C-terminus: ABC transporter C family member 7 (1328 aa).

Residues 104-389 enclose the ABC transmembrane type-1 1 domain; sequence HKTSIIVQIF…LPQAIQRLLS (286 aa). 6 helical membrane passes run 112 to 132, 140 to 160, 224 to 244, 245 to 265, 287 to 307, and 333 to 353; these read IFSA…ILYV, SFLV…FLSI, LILL…CWTI, GYSG…STFL, ISEM…LFFI, and MVVQ…YTLI. Positions 457–678 constitute an ABC transporter 1 domain; the sequence is IELVNNDSIE…FDFESIMKTK (222 aa). 490-497 serves as a coordination point for ATP; the sequence is GVVGSGKS. The segment covering 684–695 has biased composition (low complexity); that stretch reads LNNSNNNNNNNN. The interval 684 to 708 is disordered; that stretch reads LNNSNNNNNNNNNKEEEEDVENLEK. 5 helical membrane passes run 762–782, 802–822, 894–914, 988–1008, and 1014–1034; these read FIFF…FLLF, DSFY…FLGI, VLMM…LALF, IGIK…FFSL, and GLSV…NWCI. One can recognise an ABC transmembrane type-1 2 domain in the interval 765–1046; it reads FFTMIMMYII…YIEFSMKMSS (282 aa). The ABC transporter 2 domain maps to 1083–1316; sequence IQFKNVEIKY…INNQNSKFKK (234 aa). 1117–1124 is an ATP binding site; that stretch reads GKSGSGKS.

The protein belongs to the ABC transporter superfamily. ABCC family. Conjugate transporter (TC 3.A.1.208) subfamily.

It localises to the membrane. This Dictyostelium discoideum (Social amoeba) protein is ABC transporter C family member 7 (abcC7).